The sequence spans 213 residues: Phosphatidylserine decarboxylase proenzyme (213 aa).

The active-site Schiff-base intermediate with substrate; via pyruvic acid is serine 182. Serine 182 carries the post-translational modification Pyruvic acid (Ser); by autocatalysis.

It belongs to the phosphatidylserine decarboxylase family. PSD-A subfamily. In terms of assembly, heterodimer of a large membrane-associated beta subunit and a small pyruvoyl-containing alpha subunit. Pyruvate is required as a cofactor. Post-translationally, is synthesized initially as an inactive proenzyme. Formation of the active enzyme involves a self-maturation process in which the active site pyruvoyl group is generated from an internal serine residue via an autocatalytic post-translational modification. Two non-identical subunits are generated from the proenzyme in this reaction, and the pyruvate is formed at the N-terminus of the alpha chain, which is derived from the carboxyl end of the proenzyme. The post-translation cleavage follows an unusual pathway, termed non-hydrolytic serinolysis, in which the side chain hydroxyl group of the serine supplies its oxygen atom to form the C-terminus of the beta chain, while the remainder of the serine residue undergoes an oxidative deamination to produce ammonia and the pyruvoyl prosthetic group on the alpha chain.

It is found in the cell membrane. It carries out the reaction a 1,2-diacyl-sn-glycero-3-phospho-L-serine + H(+) = a 1,2-diacyl-sn-glycero-3-phosphoethanolamine + CO2. It participates in phospholipid metabolism; phosphatidylethanolamine biosynthesis; phosphatidylethanolamine from CDP-diacylglycerol: step 2/2. Catalyzes the formation of phosphatidylethanolamine (PtdEtn) from phosphatidylserine (PtdSer). The protein is Phosphatidylserine decarboxylase proenzyme of Geotalea uraniireducens (strain Rf4) (Geobacter uraniireducens).